The sequence spans 350 residues: tRNA uridine(34) hydroxylase (350 aa).

A Rhodanese domain is found at 146 to 240 (DDPDAIFIDM…YARRAREQGL (95 aa)). Cys200 acts as the Cysteine persulfide intermediate in catalysis. The segment at 318 to 350 (QRRRRAGREKGNKIFNKSRGRLNSKLGIPDPTE) is disordered.

Belongs to the TrhO family.

It carries out the reaction uridine(34) in tRNA + AH2 + O2 = 5-hydroxyuridine(34) in tRNA + A + H2O. Its function is as follows. Catalyzes oxygen-dependent 5-hydroxyuridine (ho5U) modification at position 34 in tRNAs. This chain is tRNA uridine(34) hydroxylase, found in Salmonella arizonae (strain ATCC BAA-731 / CDC346-86 / RSK2980).